The chain runs to 231 residues: Homeobox protein EMX1 (231 aa).

Positions P133 to K192 form a DNA-binding region, homeobox. Residues L193–A231 form a disordered region. Residues K203–R212 show a composition bias toward basic residues.

Belongs to the EMX homeobox family.

Its subcellular location is the nucleus. May function in combinations with OTX1/2 to specify cell fates in the developing central nervous system. In Danio rerio (Zebrafish), this protein is Homeobox protein EMX1 (emx1).